We begin with the raw amino-acid sequence, 99 residues long: Large ribosomal subunit protein bL27 (99 aa).

A propeptide spanning residues 1 to 9 (MLIMNLQLF) is cleaved from the precursor.

This sequence belongs to the bacterial ribosomal protein bL27 family. Post-translationally, the N-terminus is cleaved by ribosomal processing cysteine protease Prp.

This is Large ribosomal subunit protein bL27 from Clostridium botulinum (strain Eklund 17B / Type B).